The chain runs to 680 residues: UvrABC system protein B (680 aa).

The Helicase ATP-binding domain maps to 27-192 (SNIEAGVTDQ…ERNDYDFHRG (166 aa)). 40–47 (GVTGSGKT) contributes to the ATP binding site. The Beta-hairpin signature appears at 93 to 116 (YYDYYQPEAYVPSSDTYIEKDSSI). Residues 432-594 (QVDDLLGECR…IVPATIRKAV (163 aa)) form the Helicase C-terminal domain. One can recognise a UVR domain in the interval 637–672 (AKQIQQLERDMREAAKELEFERAAELRDRIRLLREH).

Belongs to the UvrB family. Forms a heterotetramer with UvrA during the search for lesions. Interacts with UvrC in an incision complex.

The protein resides in the cytoplasm. In terms of biological role, the UvrABC repair system catalyzes the recognition and processing of DNA lesions. A damage recognition complex composed of 2 UvrA and 2 UvrB subunits scans DNA for abnormalities. Upon binding of the UvrA(2)B(2) complex to a putative damaged site, the DNA wraps around one UvrB monomer. DNA wrap is dependent on ATP binding by UvrB and probably causes local melting of the DNA helix, facilitating insertion of UvrB beta-hairpin between the DNA strands. Then UvrB probes one DNA strand for the presence of a lesion. If a lesion is found the UvrA subunits dissociate and the UvrB-DNA preincision complex is formed. This complex is subsequently bound by UvrC and the second UvrB is released. If no lesion is found, the DNA wraps around the other UvrB subunit that will check the other stand for damage. This Nitratidesulfovibrio vulgaris (strain DSM 19637 / Miyazaki F) (Desulfovibrio vulgaris) protein is UvrABC system protein B.